A 1097-amino-acid polypeptide reads, in one-letter code: DNA-directed RNA polymerase subunit beta (1097 aa).

Residues 1070–1097 (LMQDVNPRRNTPSRPTYESLGTSEYEED) form a disordered region. The segment covering 1077–1091 (RRNTPSRPTYESLGT) has biased composition (polar residues).

It belongs to the RNA polymerase beta chain family. In terms of assembly, in cyanobacteria the RNAP catalytic core is composed of 2 alpha, 1 beta, 1 beta', 1 gamma and 1 omega subunit. When a sigma factor is associated with the core the holoenzyme is formed, which can initiate transcription.

It catalyses the reaction RNA(n) + a ribonucleoside 5'-triphosphate = RNA(n+1) + diphosphate. In terms of biological role, DNA-dependent RNA polymerase catalyzes the transcription of DNA into RNA using the four ribonucleoside triphosphates as substrates. This chain is DNA-directed RNA polymerase subunit beta, found in Prochlorococcus marinus (strain MIT 9515).